We begin with the raw amino-acid sequence, 155 residues long: MPPKKGGVTKSKAVSKKAAAVPTPKATPPGRRKSRASSVQPGDPVPQGKKRRYRPGTLALKEIRNYQRTTDLLVAKLPFARLVREIAMQFRPMDEEMRWQSQAILALQEAAEAFLVHLFEDTNLCAIHAKRVTIMQKDIQLARRIRGVWGGAGWV.

Residues Met1–Pro24 show a composition bias toward low complexity. Positions Met1 to Gly56 are disordered. The segment at Val45–Val148 is H3-like.

It belongs to the histone H3 family. As to quaternary structure, component of centromeric nucleosomes, where DNA is wrapped around a histone octamer core. The octamer contains two molecules each of H2A, H2B, hH3v/CENPA and H4 assembled in one hH3v-H4 heterotetramer and two H2A-H2B heterodimers. Interacts with the inner kinetochore. Ubiquitinated. Is degraded through ubiquitin-mediated proteolysis when not protected by its association to the kinetochore.

It is found in the nucleus. The protein localises to the chromosome. It localises to the centromere. In terms of biological role, histone H3-like nucleosomal protein that is specifically found in centromeric nucleosomes. Replaces conventional H3 in the nucleosome core of centromeric chromatin that serves as an assembly site for the inner kinetochore. Required for recruitment and assembly of kinetochore proteins, mitotic progression and chromosome segregation. May serve as an epigenetic mark that propagates centromere identity through replication and cell division. In Neurospora crassa (strain ATCC 24698 / 74-OR23-1A / CBS 708.71 / DSM 1257 / FGSC 987), this protein is Histone H3-like centromeric protein hH3v (hH3v).